Here is a 27-residue protein sequence, read N- to C-terminus: uncharacterized protein (27 aa).

Residues 3–23 (IILWAVLIIFLIGLLVVTGVF) traverse the membrane as a helical segment.

It localises to the cell inner membrane. This is an uncharacterized protein from Escherichia coli (strain K12).